A 3511-amino-acid polypeptide reads, in one-letter code: MADEEKKAKKGKKGKKAPEPEKPKRSLKGTSRLFMGFRDRTPKISKKGQFRSASAFFWGLHTGPQKTKRKKKARTVLKSTSKLMTQMRVGKKKRAMKGKKPSFMVIRFPGRRGYGRLRPRAQSLSKASTAINWLTKKFLLKKAEESGSEQATVDAWLQRSSSRVGSRKLPFPSGAEILRHGGRLRRFPRSHSIYSSGEPVGFLPFEDEAPFRHAGSRKSLYGLEGFQDLGEYYDYHREGDDYYDQQSLYHYEEQEPYLAEFGGYSPAWPPYDDYGYPPGDPYNYYHPDYYGDTLYPGYAYGYGYGYDDFEPPYAPPSGYSSPYSYHDSFESEAYPYSYYLDPYATHHMPYPPYDFPYDTPYDIPYFDPYGVPYAEGVYGGGAEAIYPPGMPYVYPEEPAFMYPWVPPPIMSPHNPYAHPMDDIAELEEPEETGEERQSTSFRLPSAAFFEQQGMDKPARSKLSLIRKFRLFPRPQVKLFGKEKLEVPLPPSLDIPLPLGDAEGEEEEEEMPPVPTMPYTHPYWSFLTPRQRNLQRALSAFGARQGLGFGPEFGHPTPRPATSLARFLKKTLSEKKPIPRLRGSQKARGGRPPVREAAYKRFGYKLAGMDPDRPNTPIVLRRSQPQARNNNNSHGPPSPRPAPRALTHWSALISPPMPAPSPSPASPLTPPFSPTFSRPPRLASPYGSLRQHPPPWAAPAHVPFPPQANWWGFAEPPGTSPEVAPDLLAFPVPRPSFRASRSRSRRAAYGFPSPSLIGSRRRPHLPSPQPSLRSLPGQGYHSPLGPLSPQLSLRRGPFQPPFPPPPRRPQSLREAFSLRRASGRLGPPRSPVLGSPRPPSPPPLLKHGPRHRSLNLPSRLPRTWRRLSEPPTRAVKPWVHRAYPPPPSAGPWGASTGALEQQENQREAEDSETPWTVPPLAPSWDVDMPPTQRPPSPWPEGIGSLRGFSRPPPVPENPLLEHTSPSCEPQSEDRVSNLTGIFLGQHHDPGPGQLTKSADPSLEKPEEVVTLGDPQPPAEPEALNPTPPNKNVVSERKVLRLSASYPLVTCKQARATWPQWHRWKTVSRTPAPLAPTRAPGPLLKAGEQPRAEPGRFAVVMPQVRGVSSFRPKGPAPVQPPEHPDQDPEQGPAPQACSLRWPRLWPPTDAHCLWSRIRTYSSQSHLRGHGGDCHKSLWKKTRPQSWQNKMHSIRNLPSMRSREQHREDGVEDMTQLEDLQETTVLANLKTRFERNLIYTYIGSILVSVNPYRMFAIYGPEQVQQYSGRALGENPPHLFAIANLAFAKMLDAKQNQCVIISGESGSGKTEATKLILRCLAAMNQRRDVMQQIKILEATPLLEAFGNAKTVRNDNSSRFGKFVEIFLEGGVICGAITSQYLLEKSRIVFQAKNERNYHIFYELLAGLPAQLRQAFSLQEAETYYYLNQGGNCEIAGKSDADDFRRLLAAMEVLGFTSEDQDSIFRILASILHLGNVYFEKHETDAQEVASVVSAREIQAVAELLQVSPEGLQKAITFKVTETIREKIFTPLTVESAVDARDAIAKVLYALLFGWLITRVNALVSPKQDTLSIAILDIYGFEDLSFNSFEQLCINYANENLQYLFNKIVFQEEQEEYIREQMDWREIAFADNQPCINLISLKPYGILRILDDQCCFPQATDHTFLQKCHYHHGANPLYSKPKMPLPEFTIKHYAGKVTYQVHKFLDKNHDQVRQDVLDLFVHSRTRVVAHLFSSHAAQTAPPRLGKSSSITRLYKAHTVAAKFQQSLLDLVEKMERCNPLFVRCLKPNHKKEPGLFEPDVMMAQLRYSGVLETVRIRKEGFPVRLPFQVFIDRYRCLVALKLNVPADGDMCVSLLSRLCTVTPDMYRVGISKLFLKEHLHQLLESMRERVQNRAALTLQRYLRGFFIQRHFRSLRRKIILLQSRARGFLARQRYQQMRQSLLKFRSLVHTYVNRRRYLKLRAEQRRRAQEAWLREQEELSKREVVPVRHLEVPAEVAGLLQAAAGLKLSSGPRVAVVRAPRLQAEPCVTLPLDINNYPMAKFIRCHFKEPSFGMLTVPLKMPLTRLPVEHHAEAISVFKLILRFMGDPHLHGTQEMILGNYIVHQGLVEPALRDEILAQLANQVWRNPNAYNSKRGWLLLAACLSGFAPSPHLDKFLLKFVSDYGQNGFQAVCQHRLLQAMGSGAARTFPPTQLEWTAIQEKASMALDVSCFNGDQFSCPVHTWSTGEAVAGDILKHRGLADGWRGWTVAMKNGVQWAELAGHDYVLDLVSDLELLRDFPRQKSYFIVGAEGPLAGRGDTRGVFGNCWDSDEDTPTRPQPQDHVAKMPDLDGYCSHKEDGTNGETEAQRWTSNRQAVDSIGESTVPPRELDGYLDSLFDPVLACGDADLEKPTAIAYRMKGGGQPGGGGGSTSEDTSRRPPEPKLKPIPGLDASTLALQQAFIHRQAVLLAREMTLQALALQQQPLSATSRPQLPERPLAPEARPKTVVGTGPPAKPVLVRPTPQSWAPGSVAKAPKIPSKPVAVPILAQDWTAPESISASPELVRYSTLNSEHFPQPTQQIRSIIKQYKQPPWAGHPEARRTDGGKVFRRPPDPHEEALMILKGQKTQLAVVPGTQVSREAVAMVKPVTSAPRPCMGPTPVQPSRSLEPPEDPVQTQLHRLVNPNFYGYQDIPWRIFLRKEVFYPKDNYSHPVQLDLLFRQILHDTFSEACLRISEDERLQMKALFAQNQLDTQRPLVTESVKRAAISMARDSWEIYFSRLFPAMGSVGTGVQILAVSHTGIKLLQMVKGSKEASRRLRVLCAYSFADILFVTMPSQNMLEFNLSNEKLILFSARAQQVKTLVDTFILELKKDSDYVVAVRNFLSEDPELLSFHKGDIIHLQSLEPTRVGYSAGCVVRKKLVYLEELRRRGPDFGWRFGAVHGRVGRFPSELVQPAAAPDFLQLPAEPGRGRAAAVAAAVASAAAAQEVGRRREGPPVRARSADSGEDSIALPPSTMLEFAQKYFRDPRRRPRDGLKLKSKEDRESKTLEDVLCFTKVPIQESLIELSDSNLNKMAVDMFVAVMRFMGDAPLKGQSELDVLCTLLKLCGDHEVMRDECYCQIVKQITDNSSPKQDSCQRGWRLLYIMAAYYSCSEVFYPYLIRFLQHVSWTPGLPFQGIAKACEQNLQKTLRFGGRLEFPSNMELRAMLAGRSSKRQLFLLPGGLERHLKIKTCTVALDVIEGLCTEMALTRPEAFDEYVIFVVTNRGQHVCPLSCRAYILDVASEMEQVDGGYTLWFRRVLWDQPLKFENELYVTMHYNQVLPDYLKGLFSSVPARQPTEQQLQQVSKLASLQHRAKDHFYLPSVREVQEYIPAQLYHTTAGDTWLNLVSQHRQQTQALSPHQARAQFLGLLSAFPLFGSSFFFIQSCSNVLVPAPCILAVNHNGLNFLSTKTHELIVKIPLKEIQSTWTQQPTANSSYPYVEISLGDVAAQRTMQLQLEQGLELCRVVAVHVESMLSAREERLTLPPSEITLL.

Disordered regions lie at residues 1–44 (MADE…TPKI), 574–690 (KKPI…SLRQ), 712–1030 (FAEP…PNKN), and 1105–1135 (VSSFRPKGPAPVQPPEHPDQDPEQGPAPQAC). Residues 622 to 634 (SQPQARNNNNSHG) are compositionally biased toward polar residues. The span at 654-672 (PPMPAPSPSPASPLTPPFS) shows a compositional bias: pro residues. The segment covering 769 to 792 (PSLRSLPGQGYHSPLGPLSPQLSL) has biased composition (low complexity). The span at 797–807 (FQPPFPPPPRR) shows a compositional bias: pro residues. One can recognise a Myosin motor domain in the interval 1206 to 1883 (DGVEDMTQLE…LHQLLESMRE (678 aa)). 1299 to 1306 (GESGSGKT) contributes to the ATP binding site. Positions 1307–1334 (EATKLILRCLAAMNQRRDVMQQIKILEA) form a coiled coil. An actin-binding region spans residues 1776–1783 (FVRCLKPN). A neck or regulatory domain region spans residues 1872 to 2013 (EHLHQLLESM…SSGPRVAVVR (142 aa)). IQ domains lie at 1886-1908 (QNRAALTLQRYLRGFFIQRHFRS) and 1909-1938 (LRRKIILLQSRARGFLARQRYQQMRQSLLK). The interval 2014-3511 (APRLQAEPCV…TLPPSEITLL (1498 aa)) is tail. Residues 2049–2195 (MLTVPLKMPL…PTQLEWTAIQ (147 aa)) form the MyTH4 1 domain. Disordered stretches follow at residues 2330–2359 (SHKEDGTNGETEAQRWTSNRQAVDSIGEST), 2392–2425 (YRMKGGGQPGGGGGSTSEDTSRRPPEPKLKPIPG), 2460–2509 (PLSA…SVAK), 2565–2584 (KQPPWAGHPEARRTDGGKVF), and 2629–2648 (RPCMGPTPVQPSRSLEPPED). Over residues 2337–2351 (NGETEAQRWTSNRQA) the composition is skewed to polar residues. A compositionally biased stretch (gly residues) spans 2395–2406 (KGGGQPGGGGGS). The segment covering 2410-2420 (DTSRRPPEPKL) has biased composition (basic and acidic residues). The segment covering 2573-2584 (PEARRTDGGKVF) has biased composition (basic and acidic residues). The region spanning 2848 to 2934 (KDSDYVVAVR…PSELVQPAAA (87 aa)) is the SH3 domain. The interval 2964–2984 (EVGRRREGPPVRARSADSGED) is disordered. Positions 2965–2980 (VGRRREGPPVRARSAD) are enriched in basic and acidic residues. One can recognise a MyTH4 2 domain in the interval 3031-3185 (FTKVPIQESL…PSNMELRAML (155 aa)). Residues 3190-3511 (SKRQLFLLPG…TLPPSEITLL (322 aa)) enclose the FERM domain.

Belongs to the TRAFAC class myosin-kinesin ATPase superfamily. Myosin family. In terms of assembly, interacts with the third PDZ domain of WHRN which is necessary for localization of WHRN to stereocilium tips. Interacts with FASLG. Interacts with EPS8. As to expression, in the developing inner ear, expressed in cochlea and vestibular apparatus. Expression appears to be restricted to cochlear neurosensory cells and upper epithelial layer of macula saccula. Also expressed in macula utriculi and cristae ampullaris of the semicircular canals. In adult cochlear hair cells, highest expression in stereocilia and apical body.

The protein localises to the cell projection. Its subcellular location is the stereocilium. The protein resides in the cytoplasm. It localises to the cytoskeleton. Its function is as follows. Myosins are actin-based motor molecules with ATPase activity. Unconventional myosins serve in intracellular movements. Their highly divergent tails are presumed to bind to membranous compartments, which would be moved relative to actin filaments. Required for the arrangement of stereocilia in mature hair bundles. The chain is Unconventional myosin-XV (Myo15a) from Mus musculus (Mouse).